The following is a 422-amino-acid chain: MALRGSHRLEVIFKRCIASPVLHSQAGNRRSSQLAIKGVDPNSNGNSGQYQQNGEHKEKGWRRLVRFFVPFSLGAAVSAAIIQREDLTPTIAASKMTGRRRDFNFIADVVAGCADSVVYIEIKDTRHFDYFSGQPITASNGSGFIIEQNGLILTNAHVVINKPHTMVQVRLSDGRTFPATIEDVDQTSDLATLRIQVNNLSVMRLGKSSTLRSGEWVVALGSPLALSNTVTAGVISSTQRASQELGLRNRDINYLQTDAAITFGNSGGPLVNLDGEAIGVNSMKVTAGISFAIPIDYVKVFLERAAEKRKKGSAYKTGYPVKRYMGITMLTLTPDILFELKSRSQNMPSNLTHGVLVWKVIVGSPAHSGGLQPGDIVTHINKKEIKNSSDVYDALADNSKTLDIVILRGVKQMHVTITPEDP.

Residues 1–17 (MALRGSHRLEVIFKRCI) constitute a mitochondrion transit peptide. A propeptide spanning residues 18 to 74 (ASPVLHSQAGNRRSSQLAIKGVDPNSNGNSGQYQQNGEHKEKGWRRLVRFFVPFSLG) is cleaved from the precursor. Residues 28-55 (NRRSSQLAIKGVDPNSNGNSGQYQQNGE) form a disordered region. Residues 42–53 (NSNGNSGQYQQN) show a composition bias toward low complexity. The chain crosses the membrane as a helical span at residues 64 to 82 (LVRFFVPFSLGAAVSAAII). Short sequence motifs (IAP-binding) lie at residues 75 to 78 (AAVS) and 94 to 97 (SKMT). The segment at 139–302 (SNGSGFIIEQ…IPIDYVKVFL (164 aa)) is serine protease. Residues His157, Asp189, and Ser266 each act as charge relay system in the active site. One can recognise a PDZ domain in the interval 325-410 (MGITMLTLTP…TLDIVILRGV (86 aa)).

This sequence belongs to the peptidase S1C family. In terms of assembly, interacts with th/DIAP1 (via BIR 2 domain).

The protein resides in the mitochondrion intermembrane space. Its subcellular location is the mitochondrion membrane. The catalysed reaction is Cleavage of non-polar aliphatic amino-acids at the P1 position, with a preference for Val, Ile and Met. At the P2 and P3 positions, Arg is selected most strongly with a secondary preference for other hydrophilic residues.. In terms of biological role, serine protease that shows proteolytic activity against a non-specific substrate beta-casein. Promotes or induces cell death either by direct binding to and inhibition of BIRC proteins (also called inhibitor of apoptosis proteins, IAPs), leading to an increase in caspase activity, or by a BIRC inhibition-independent, caspase-independent and serine protease activity-dependent mechanism. Can antagonize antiapoptotic activity of th/Diap1 by directly inducing the degradation of th/Diap1. This Drosophila sechellia (Fruit fly) protein is Serine protease HTRA2, mitochondrial.